A 90-amino-acid chain; its full sequence is uncharacterized protein (90 aa).

This is an uncharacterized protein from Archaeoglobus fulgidus (strain ATCC 49558 / DSM 4304 / JCM 9628 / NBRC 100126 / VC-16).